The primary structure comprises 669 residues: p135Gag-Myb-Ets-transforming protein (669 aa).

The span at N1–Q10 shows a compositional bias: basic and acidic residues. Disordered stretches follow at residues N1–T27 and T132–T153. The segment at P90–W142 is transcriptional activation domain. Residues A276–E361 form the PNT domain. Positions G556–V640 form a DNA-binding region, ETS.

Its subcellular location is the host nucleus. Its function is as follows. DNA-binding protein that specifically recognizes the sequence 5'-YAAC[GT]G-3'. The Myb-Ets protein induces predominantly erythroblastosis in chicken and transforms avian erythroblasts and immature myelomonocytic cells in culture. It appears that the Ets domain is responsible for the effects on erythroid cells and that the Myb domain encodes the myeloid-transforming capacity. This Avian leukemia virus E26 protein is p135Gag-Myb-Ets-transforming protein (GAG).